A 476-amino-acid polypeptide reads, in one-letter code: Serine/threonine-protein kinase chk-2 (476 aa).

The 62-residue stretch at 66-127 (FVCGRGSDDA…NGTLVNQEMI (62 aa)) folds into the FHA domain. Positions 170 to 436 (HVTSHSLGKG…AVELMSTQWM (267 aa)) constitute a Protein kinase domain. ATP contacts are provided by residues 177 to 184 (GKGGFGKV), Lys-199, and 252 to 258 (EYVGGGE). Asp-301 acts as the Proton acceptor in catalysis. ATP is bound by residues 305-306 (EN) and Asp-322.

It belongs to the protein kinase superfamily. CAMK Ser/Thr protein kinase family. CHK2 subfamily. Mg(2+) serves as cofactor. Highly expressed in germline tissue.

It is found in the nucleus. The enzyme catalyses L-seryl-[protein] + ATP = O-phospho-L-seryl-[protein] + ADP + H(+). The catalysed reaction is L-threonyl-[protein] + ATP = O-phospho-L-threonyl-[protein] + ADP + H(+). In terms of biological role, serine/threonine-protein kinase which is required for checkpoint-mediated cell cycle arrest, activation of DNA repair and apoptosis in response to the presence of DNA double-strand breaks. May also negatively regulate cell cycle progression during unperturbed cell cycles. Phosphorylates and inhibits cdc25 phosphatase, preventing entry into mitosis. Required for nuclear reorganization and homologous chromosome pairing during meiotic prophase. The chain is Serine/threonine-protein kinase chk-2 (chk-2) from Caenorhabditis elegans.